The chain runs to 482 residues: Glycogen synthase 2 (482 aa).

Lys18 provides a ligand contact to ADP-alpha-D-glucose.

This sequence belongs to the glycosyltransferase 1 family. Bacterial/plant glycogen synthase subfamily.

The enzyme catalyses [(1-&gt;4)-alpha-D-glucosyl](n) + ADP-alpha-D-glucose = [(1-&gt;4)-alpha-D-glucosyl](n+1) + ADP + H(+). It participates in glycan biosynthesis; glycogen biosynthesis. In terms of biological role, synthesizes alpha-1,4-glucan chains using ADP-glucose. The chain is Glycogen synthase 2 from Bradyrhizobium diazoefficiens (strain JCM 10833 / BCRC 13528 / IAM 13628 / NBRC 14792 / USDA 110).